A 1272-amino-acid chain; its full sequence is AF4/FMR2 family member 2 (1272 aa).

Disordered regions lie at residues 93–183, 201–225, and 283–302; these read IPKN…LTQD, QIGE…GEDA, and AYVR…PTLK. Positions 97-107 are enriched in polar residues; the sequence is SVPQNPNNKNE. Residues 151 to 160 show a composition bias toward basic and acidic residues; it reads SKPEWSRDSH. The span at 161-183 shows a compositional bias: polar residues; the sequence is NPSTVLASQASGQPNKMQTLTQD. Ser-391 carries the post-translational modification Phosphoserine. Disordered stretches follow at residues 418–491, 535–687, 779–829, and 842–903; these read KAKP…KWQL, TNAS…DQEE, SLHA…PEKK, and PPCI…QDKN. Positions 426–438 are enriched in pro residues; that stretch reads VNPPLATPQPPPA. Residues 439–452 show a composition bias toward low complexity; the sequence is VQASGGSGSSSESE. A Phosphothreonine modification is found at Thr-478. The span at 543-558 shows a compositional bias: basic and acidic residues; the sequence is EPKERPLLSLIREKAR. Positions 576 to 586 are enriched in polar residues; it reads STTSETVSQRT. Over residues 616–629 the composition is skewed to basic and acidic residues; that stretch reads PKEKESVELHDPPR. The span at 630–640 shows a compositional bias: basic residues; sequence GRNKATAHKPA. Residues 818-829 show a composition bias toward basic and acidic residues; the sequence is PTEVAEKIPEKK. Pro residues-rich tracts occupy residues 844-853 and 874-883; these read CISPAPPHKP and FPPPLSPLPE.

The protein belongs to the AF4 family.

It localises to the nucleus speckle. RNA-binding protein. Might be involved in alternative splicing regulation through an interaction with G-quartet RNA structure. This chain is AF4/FMR2 family member 2 (AFF2), found in Pan troglodytes (Chimpanzee).